Consider the following 382-residue polypeptide: Membrane protein MLC1 (382 aa).

Residues 1 to 28 (MTREGQFREELGYDRMPTLERGRQDAGR) show a composition bias toward basic and acidic residues. Positions 1–43 (MTREGQFREELGYDRMPTLERGRQDAGRQDPGSYTPDSKPKDL) are disordered. 4 consecutive transmembrane segments (helical) span residues 58 to 78 (WVFS…SLYL), 88 to 107 (YLRC…FAVG), 117 to 137 (FQIL…WFGC), and 148 to 168 (INFN…TVII). Phosphoserine occurs at positions 183, 185, and 188. Helical transmembrane passes span 205–225 (SVVE…ALNV), 234–254 (LSVT…ASHV), 263–283 (LVEV…TASG), and 309–329 (LLLL…GTAI).

As to quaternary structure, interacts with ATP1B1. Part of a complex containing ATP1B1, TRPV4, AQP4 and HEPACAM.

Its subcellular location is the membrane. The protein resides in the cell membrane. It is found in the cytoplasm. It localises to the perinuclear region. The protein localises to the endoplasmic reticulum. Its function is as follows. Transmembrane protein mainly expressed in brain astrocytes that may play a role in transport across the blood-brain and brain-cerebrospinal fluid barriers. Regulates the response of astrocytes to hypo-osmosis by promoting calcium influx. May function as regulatory protein of membrane protein complexes such as ion channels. The polypeptide is Membrane protein MLC1 (Mus musculus (Mouse)).